Reading from the N-terminus, the 249-residue chain is Short-chain dehydrogenase virB (249 aa).

Residues Ile-16, Arg-104, Tyr-150, Lys-154, Val-183, and Thr-185 each coordinate NADP(+). Residue Tyr-150 is the Proton donor of the active site. Lys-154 acts as the Lowers pKa of active site Tyr in catalysis.

Belongs to the short-chain dehydrogenases/reductases (SDR) family.

It functions in the pathway secondary metabolite biosynthesis. Its function is as follows. Short-chain dehydrogenase; part of the gene cluster that mediates the biosynthesis of virensols and trichoxide, fungal natural products that contain or are derived from a salicylaldehyde core. The pathway begins with the synthesis of the reduced chain in virensol C by the highly reducing polyketide synthase virA via condensation of one acetate and 8 malonate units. VirA has interesting programming rules since the first 2 ketides are fully reduced, the 3 following ketides undergo beta-dehydration, and the last 3 ketides are only reduced to beta-hydroxys to yield the trihydroxy portion. The production of aldehyde virensol C by virA alone is surprising, since virA does not contain a reductase (R) domain that is typically associated with reductive product release in HRPKS. The cupin-domain enzyme virC is involved in enhancing virA product turnover. The short-chain dehydrogenase virB then oxidizes the C-7 alcohol of virensol C to a ketone, yielding virensol D. Virensol D is further transformed to salicylaldehyde 5-deoxyaurocitrin by the short-chain dehydrogenase virD. VirD catalyzes the dehydrogenation of C-3 to form the beta-ketone aldehyde, which is followed by the generation of the nucleophilic C-2 that is required for the intramolecular aldol condensation between C-2 and C-7, itself followed by dehydration and aromatization which leads to salicylaldehyde 5-deoxyaurocitrin. While the dehydrogenation of virensol D is definitely catalyzed by virD, the aldol condensation and dehydration may be uncatalyzed or assisted by virD. The short chain dehydrogenase virG then converts salicylaldehyde 5-deoxyaurocitrin into virensol B which is further hydroxylated by the cytochrome P450 monooxygenase virE to yield the hydroquinone virensol A. VirI then may oxidize virensol A to form the quinone, while virH performs the epoxidation. Finally, the two remaining short-chain dehydrogenases, virK and virL, are probably responsible for reducing the ketones to the corresponding alcohols to furnish the epoxycyclohexanol structure in trichoxide. In Hypocrea virens (strain Gv29-8 / FGSC 10586) (Gliocladium virens), this protein is Short-chain dehydrogenase virB.